Reading from the N-terminus, the 253-residue chain is Imidazole glycerol phosphate synthase subunit HisF (253 aa).

Active-site residues include aspartate 11 and aspartate 130.

This sequence belongs to the HisA/HisF family. In terms of assembly, heterodimer of HisH and HisF.

It localises to the cytoplasm. The enzyme catalyses 5-[(5-phospho-1-deoxy-D-ribulos-1-ylimino)methylamino]-1-(5-phospho-beta-D-ribosyl)imidazole-4-carboxamide + L-glutamine = D-erythro-1-(imidazol-4-yl)glycerol 3-phosphate + 5-amino-1-(5-phospho-beta-D-ribosyl)imidazole-4-carboxamide + L-glutamate + H(+). It functions in the pathway amino-acid biosynthesis; L-histidine biosynthesis; L-histidine from 5-phospho-alpha-D-ribose 1-diphosphate: step 5/9. In terms of biological role, IGPS catalyzes the conversion of PRFAR and glutamine to IGP, AICAR and glutamate. The HisF subunit catalyzes the cyclization activity that produces IGP and AICAR from PRFAR using the ammonia provided by the HisH subunit. This Acetivibrio thermocellus (strain ATCC 27405 / DSM 1237 / JCM 9322 / NBRC 103400 / NCIMB 10682 / NRRL B-4536 / VPI 7372) (Clostridium thermocellum) protein is Imidazole glycerol phosphate synthase subunit HisF.